A 415-amino-acid polypeptide reads, in one-letter code: Camphor 5-monooxygenase (415 aa).

C358 serves as a coordination point for heme.

It belongs to the cytochrome P450 family. Heme serves as cofactor.

Its subcellular location is the cytoplasm. The catalysed reaction is 2 reduced [2Fe-2S]-[putidaredoxin] + (1R,4R)-camphor + O2 + 2 H(+) = (1R,4R,5R)-5-hydroxycamphor + 2 oxidized [2Fe-2S]-[putidaredoxin] + H2O. It participates in terpene metabolism; (R)-camphor degradation. In terms of biological role, involved in a camphor oxidation system. The protein is Camphor 5-monooxygenase (camC) of Pseudomonas putida (Arthrobacter siderocapsulatus).